A 357-amino-acid polypeptide reads, in one-letter code: Tetraacyldisaccharide 4'-kinase (357 aa).

Residue 49-56 coordinates ATP; it reads TIGGTGKT.

The protein belongs to the LpxK family.

It carries out the reaction a lipid A disaccharide + ATP = a lipid IVA + ADP + H(+). Its pathway is glycolipid biosynthesis; lipid IV(A) biosynthesis; lipid IV(A) from (3R)-3-hydroxytetradecanoyl-[acyl-carrier-protein] and UDP-N-acetyl-alpha-D-glucosamine: step 6/6. Transfers the gamma-phosphate of ATP to the 4'-position of a tetraacyldisaccharide 1-phosphate intermediate (termed DS-1-P) to form tetraacyldisaccharide 1,4'-bis-phosphate (lipid IVA). The chain is Tetraacyldisaccharide 4'-kinase from Porphyromonas gingivalis (strain ATCC BAA-308 / W83).